Consider the following 338-residue polypeptide: tRNA N6-adenosine threonylcarbamoyltransferase (338 aa).

Positions 114 and 118 each coordinate Fe cation. Substrate is bound by residues 136–140 (LVSGG), D169, G182, D186, and N275. Residue D301 coordinates Fe cation.

It belongs to the KAE1 / TsaD family. It depends on Fe(2+) as a cofactor.

The protein localises to the cytoplasm. It catalyses the reaction L-threonylcarbamoyladenylate + adenosine(37) in tRNA = N(6)-L-threonylcarbamoyladenosine(37) in tRNA + AMP + H(+). Required for the formation of a threonylcarbamoyl group on adenosine at position 37 (t(6)A37) in tRNAs that read codons beginning with adenine. Is involved in the transfer of the threonylcarbamoyl moiety of threonylcarbamoyl-AMP (TC-AMP) to the N6 group of A37, together with TsaE and TsaB. TsaD likely plays a direct catalytic role in this reaction. The polypeptide is tRNA N6-adenosine threonylcarbamoyltransferase (Streptococcus equi subsp. equi (strain 4047)).